A 710-amino-acid chain; its full sequence is Denticleless protein homolog A (710 aa).

WD repeat units follow at residues 47 to 89 (GMPV…MQRL), 96 to 135 (AHTN…LIGE), and 138 to 178 (GHQC…KDGF). Residues 168–171 (WDTR) carry the DDB1-binding motif motif. The Nuclear localization signal signature appears at 197 to 204 (PSKMKKRK). WD repeat units follow at residues 215–254 (DSQQ…SAYR), 270–309 (TRKL…TDPV), 314–355 (GHQN…AAPV), and 359–398 (GHCQ…CEDS). A DDB1-binding motif motif is present at residues 244-247 (WDLR). Disordered regions lie at residues 428–534 (GKPS…VSSA) and 652–698 (ALGH…PGSM). The span at 430–450 (PSVMSSSSLTSSPTPASCAPS) shows a compositional bias: low complexity. Polar residues-rich tracts occupy residues 504–516 (TPKS…TKTP) and 659–690 (SSPQ…SPVS).

It belongs to the WD repeat cdt2 family. As to quaternary structure, component of the DCX(DTL) E3 ubiquitin ligase complex, at least composed of cul4 (cul4a or cul4b), ddb1, dtl/cdt2 and rbx1.

It localises to the nucleus. The protein resides in the cytoplasm. The protein localises to the cytoskeleton. Its subcellular location is the microtubule organizing center. It is found in the centrosome. It localises to the chromosome. It functions in the pathway protein modification; protein ubiquitination. Substrate-specific adapter of a DCX (DDB1-CUL4-X-box) E3 ubiquitin-protein ligase complex required for cell cycle control, DNA damage response and translesion DNA synthesis. The DCX(DTL) complex, also named CRL4(CDT2) complex, mediates the polyubiquitination and subsequent degradation of CDT1, CDKN1A/p21(CIP1), KMT5A and SDE2. CDT1 degradation in response to DNA damage is necessary to ensure proper cell cycle regulation of DNA replication. CDKN1A/p21(CIP1) degradation during S phase or following UV irradiation is essential to control replication licensing. KMT5A degradation is also important for a proper regulation of mechanisms such as TGF-beta signaling, cell cycle progression, DNA repair and cell migration. Most substrates require their interaction with PCNA for their polyubiquitination: substrates interact with PCNA via their PIP-box, and those containing the 'K+4' motif in the PIP box, recruit the DCX(DTL) complex, leading to their degradation. In undamaged proliferating cells, the DCX(DTL) complex also promotes the 'Lys-164' monoubiquitination of PCNA, thereby being involved in PCNA-dependent translesion DNA synthesis. May play a role in the regulation of the circadian clock. This chain is Denticleless protein homolog A (dtl-a), found in Xenopus laevis (African clawed frog).